The following is a 445-amino-acid chain: NADH-quinone oxidoreductase subunit F (445 aa).

NAD(+) is bound at residue 61–70 (GRGGAGFSTG). 174–221 (GAGRYICGEETALINSLEGRRANPRSKPPFPATSGAWGKPTCVNNVET) provides a ligand contact to FMN. The [4Fe-4S] cluster site is built by Cys-351, Cys-354, Cys-357, and Cys-398.

This sequence belongs to the complex I 51 kDa subunit family. Composed of 13 different subunits. Subunits NuoCD, E, F, and G constitute the peripheral sector of the complex. Requires FMN as cofactor. It depends on [4Fe-4S] cluster as a cofactor.

The catalysed reaction is a quinone + NADH + 5 H(+)(in) = a quinol + NAD(+) + 4 H(+)(out). Functionally, NDH-1 shuttles electrons from NADH, via FMN and iron-sulfur (Fe-S) centers, to quinones in the respiratory chain. The immediate electron acceptor for the enzyme in this species is believed to be ubiquinone. Couples the redox reaction to proton translocation (for every two electrons transferred, four hydrogen ions are translocated across the cytoplasmic membrane), and thus conserves the redox energy in a proton gradient. This Escherichia coli (strain K12) protein is NADH-quinone oxidoreductase subunit F (nuoF).